The chain runs to 883 residues: Translation initiation factor IF-2 (883 aa).

Disordered regions lie at residues 1 to 96 (MVDT…RSGM) and 132 to 259 (QRRA…RGRL). Positions 57–66 (PAEPAAAAPE) are enriched in low complexity. Residues 72–87 (TPAPPAVSPRQQPRPS) show a composition bias toward pro residues. Over residues 132-188 (QRRAAQELVDKAEREAAEVRRKAEEERHRHEEETKRKAETEAKKRFGEAEPAKKPAD) the composition is skewed to basic and acidic residues. The span at 191–217 (PASTSTTTTAPRAPVTTTTRPPAVAAE) shows a compositional bias: low complexity. Positions 380 to 551 (PRSPVVTVMG…ALQAELLDLK (172 aa)) constitute a tr-type G domain. The G1 stretch occupies residues 389–396 (GHVDHGKT). 389 to 396 (GHVDHGKT) is a GTP binding site. The G2 stretch occupies residues 414–418 (GITQH). Residues 437 to 440 (DTPG) form a G3 region. GTP is bound by residues 437-441 (DTPGH) and 491-494 (NKID). A G4 region spans residues 491–494 (NKID). The tract at residues 527–529 (SAK) is G5.

It belongs to the TRAFAC class translation factor GTPase superfamily. Classic translation factor GTPase family. IF-2 subfamily.

The protein localises to the cytoplasm. Functionally, one of the essential components for the initiation of protein synthesis. Protects formylmethionyl-tRNA from spontaneous hydrolysis and promotes its binding to the 30S ribosomal subunits. Also involved in the hydrolysis of GTP during the formation of the 70S ribosomal complex. The polypeptide is Translation initiation factor IF-2 (Rhodopseudomonas palustris (strain BisB5)).